A 1058-amino-acid polypeptide reads, in one-letter code: Ubiquitin-like modifier-activating enzyme 1 (1058 aa).

Positions 1-47 are disordered; sequence MSSSPLSKKRRVSGPDPKPGSNCSPAQSVLSEVPSVPTNGMAKNGSE. At Ser-2 the chain carries N-acetylserine. At Ser-2 the chain carries N-acetylalanine. Ser-4 is subject to Phosphoserine. The short motif at 5–11 is the Nuclear localization signal element; that stretch reads PLSKKRR. Phosphoserine is present on residues Ser-13, Ser-21, Ser-24, and Ser-46. Positions 21–30 are enriched in polar residues; it reads SNCSPAQSVL. Tyr-55 bears the Phosphotyrosine mark. Repeat copies occupy residues 63-199 and 459-611. The interval 63–611 is 2 approximate repeats; that stretch reads GHEAMKRLQT…GTKGNVQVVI (549 aa). Residues Ala-478, Asp-504, Arg-515, Lys-528, and 576–577 each bind ATP; that span reads DN. The residue at position 528 (Lys-528) is an N6-succinyllysine. Cys-632 (glycyl thioester intermediate) is an active-site residue. An N6-acetyllysine modification is found at Lys-671. Thr-800 is subject to Phosphothreonine. Phosphoserine is present on residues Ser-810, Ser-816, Ser-820, and Ser-835. Lys-980 carries the N6-acetyllysine modification.

It belongs to the ubiquitin-activating E1 family. Monomer. Interacts with GAN (via BTB domain). In terms of processing, ISGylated. In terms of tissue distribution, detected in erythrocytes (at protein level). Ubiquitous.

It localises to the cytoplasm. Its subcellular location is the mitochondrion. The protein localises to the nucleus. The catalysed reaction is ATP + ubiquitin + [E1 ubiquitin-activating enzyme]-L-cysteine = AMP + diphosphate + S-ubiquitinyl-[E1 ubiquitin-activating enzyme]-L-cysteine.. Its pathway is protein modification; protein ubiquitination. In terms of biological role, catalyzes the first step in ubiquitin conjugation to mark cellular proteins for degradation through the ubiquitin-proteasome system. Activates ubiquitin by first adenylating its C-terminal glycine residue with ATP, and thereafter linking this residue to the side chain of a cysteine residue in E1, yielding a ubiquitin-E1 thioester and free AMP. Essential for the formation of radiation-induced foci, timely DNA repair and for response to replication stress. Promotes the recruitment of TP53BP1 and BRCA1 at DNA damage sites. The polypeptide is Ubiquitin-like modifier-activating enzyme 1 (UBA1) (Homo sapiens (Human)).